We begin with the raw amino-acid sequence, 124 residues long: Ribonuclease pancreatic (124 aa).

The span at 1 to 13 (KETAAAKFERQHI) shows a compositional bias: basic and acidic residues. Residues 1–24 (KETAAAKFERQHIDSNPSSVSSSN) are disordered. Substrate-binding residues include Lys-7 and Arg-10. The active-site Proton acceptor is His-12. Low complexity predominate over residues 15 to 24 (SNPSSVSSSN). 4 disulfides stabilise this stretch: Cys-26–Cys-84, Cys-40–Cys-95, Cys-58–Cys-110, and Cys-65–Cys-72. Asn-34 carries N-linked (GlcNAc...) asparagine; partial glycosylation. Residues 41–45 (KPVNT), Lys-66, and Arg-85 contribute to the substrate site. The active-site Proton donor is His-119.

Belongs to the pancreatic ribonuclease family. In terms of assembly, monomer. Interacts with and forms tight 1:1 complexes with RNH1. Dimerization of two such complexes may occur. Interaction with RNH1 inhibits this protein. As to expression, pancreas.

The protein resides in the secreted. It catalyses the reaction an [RNA] containing cytidine + H2O = an [RNA]-3'-cytidine-3'-phosphate + a 5'-hydroxy-ribonucleotide-3'-[RNA].. The catalysed reaction is an [RNA] containing uridine + H2O = an [RNA]-3'-uridine-3'-phosphate + a 5'-hydroxy-ribonucleotide-3'-[RNA].. Endonuclease that catalyzes the cleavage of RNA on the 3' side of pyrimidine nucleotides. Acts on single-stranded and double-stranded RNA. In Antilocapra americana (Pronghorn), this protein is Ribonuclease pancreatic (RNASE1).